The chain runs to 544 residues: Probable acyl-activating enzyme 8 (544 aa).

This sequence belongs to the ATP-dependent AMP-binding enzyme family. In terms of tissue distribution, expressed at low levels in roots, leaves, stems, flowers and developing seeds.

In terms of biological role, may act as an acid--thiol ligase that activates carboxylic acids by forming acyl-CoAs. The protein is Probable acyl-activating enzyme 8 (AAE8) of Arabidopsis thaliana (Mouse-ear cress).